A 460-amino-acid chain; its full sequence is Bifunctional protein GlmU (460 aa).

Positions 1 to 229 are pyrophosphorylase; the sequence is MTNYAIILAA…FNESLGVNDR (229 aa). UDP-N-acetyl-alpha-D-glucosamine contacts are provided by residues 8–11, lysine 22, glutamine 72, and 77–78; these read LAAG and GT. Residue aspartate 102 coordinates Mg(2+). UDP-N-acetyl-alpha-D-glucosamine contacts are provided by glycine 139, glutamate 154, asparagine 169, and asparagine 227. Asparagine 227 lines the Mg(2+) pocket. Residues 230-250 form a linker region; it reads VALATAETVMRQRITQKHMVN. The tract at residues 251 to 460 is N-acetyltransferase; it reads GVTFHNPETV…RLAHHPSRSK (210 aa). Positions 332 and 350 each coordinate UDP-N-acetyl-alpha-D-glucosamine. Histidine 362 functions as the Proton acceptor in the catalytic mechanism. UDP-N-acetyl-alpha-D-glucosamine is bound by residues tyrosine 365 and asparagine 376. Acetyl-CoA is bound by residues alanine 379, 385–386, serine 404, alanine 422, and arginine 439; that span reads NY.

This sequence in the N-terminal section; belongs to the N-acetylglucosamine-1-phosphate uridyltransferase family. It in the C-terminal section; belongs to the transferase hexapeptide repeat family. In terms of assembly, homotrimer. Mg(2+) serves as cofactor.

Its subcellular location is the cytoplasm. It carries out the reaction alpha-D-glucosamine 1-phosphate + acetyl-CoA = N-acetyl-alpha-D-glucosamine 1-phosphate + CoA + H(+). The catalysed reaction is N-acetyl-alpha-D-glucosamine 1-phosphate + UTP + H(+) = UDP-N-acetyl-alpha-D-glucosamine + diphosphate. Its pathway is nucleotide-sugar biosynthesis; UDP-N-acetyl-alpha-D-glucosamine biosynthesis; N-acetyl-alpha-D-glucosamine 1-phosphate from alpha-D-glucosamine 6-phosphate (route II): step 2/2. The protein operates within nucleotide-sugar biosynthesis; UDP-N-acetyl-alpha-D-glucosamine biosynthesis; UDP-N-acetyl-alpha-D-glucosamine from N-acetyl-alpha-D-glucosamine 1-phosphate: step 1/1. It functions in the pathway bacterial outer membrane biogenesis; LPS lipid A biosynthesis. Functionally, catalyzes the last two sequential reactions in the de novo biosynthetic pathway for UDP-N-acetylglucosamine (UDP-GlcNAc). The C-terminal domain catalyzes the transfer of acetyl group from acetyl coenzyme A to glucosamine-1-phosphate (GlcN-1-P) to produce N-acetylglucosamine-1-phosphate (GlcNAc-1-P), which is converted into UDP-GlcNAc by the transfer of uridine 5-monophosphate (from uridine 5-triphosphate), a reaction catalyzed by the N-terminal domain. This Streptococcus pyogenes serotype M3 (strain ATCC BAA-595 / MGAS315) protein is Bifunctional protein GlmU.